A 273-amino-acid polypeptide reads, in one-letter code: ATP synthase subunit delta (273 aa).

Belongs to the ATPase delta chain family. In terms of assembly, F-type ATPases have 2 components, F(1) - the catalytic core - and F(0) - the membrane proton channel. F(1) has five subunits: alpha(3), beta(3), gamma(1), delta(1), epsilon(1). F(0) has three main subunits: a(1), b(2) and c(10-14). The alpha and beta chains form an alternating ring which encloses part of the gamma chain. F(1) is attached to F(0) by a central stalk formed by the gamma and epsilon chains, while a peripheral stalk is formed by the delta and b chains.

It is found in the cell membrane. In terms of biological role, f(1)F(0) ATP synthase produces ATP from ADP in the presence of a proton or sodium gradient. F-type ATPases consist of two structural domains, F(1) containing the extramembraneous catalytic core and F(0) containing the membrane proton channel, linked together by a central stalk and a peripheral stalk. During catalysis, ATP synthesis in the catalytic domain of F(1) is coupled via a rotary mechanism of the central stalk subunits to proton translocation. Functionally, this protein is part of the stalk that links CF(0) to CF(1). It either transmits conformational changes from CF(0) to CF(1) or is implicated in proton conduction. The sequence is that of ATP synthase subunit delta from Streptomyces avermitilis (strain ATCC 31267 / DSM 46492 / JCM 5070 / NBRC 14893 / NCIMB 12804 / NRRL 8165 / MA-4680).